Reading from the N-terminus, the 374-residue chain is Chaperone protein DnaJ (374 aa).

The region spanning 5 to 70 is the J domain; sequence DYYEVLGISR…SKRAAYDQFG (66 aa). Residues 129 to 207 form a CR-type zinc finger; the sequence is GKTVKINIPG…CHGQGRVRQE (79 aa). Zn(2+)-binding residues include Cys142, Cys145, Cys159, Cys162, Cys181, Cys184, Cys195, and Cys198. CXXCXGXG motif repeat units follow at residues 142 to 149, 159 to 166, 181 to 188, and 195 to 202; these read CEACDGSG, CGTCQGMG, CPTCRGSG, and CKSCHGQG. Residues 216 to 238 form a disordered region; sequence PGVDTGDRIRLSGEGEMGVDGGP.

Belongs to the DnaJ family. As to quaternary structure, homodimer. The cofactor is Zn(2+).

Its subcellular location is the cytoplasm. In terms of biological role, participates actively in the response to hyperosmotic and heat shock by preventing the aggregation of stress-denatured proteins and by disaggregating proteins, also in an autonomous, DnaK-independent fashion. Unfolded proteins bind initially to DnaJ; upon interaction with the DnaJ-bound protein, DnaK hydrolyzes its bound ATP, resulting in the formation of a stable complex. GrpE releases ADP from DnaK; ATP binding to DnaK triggers the release of the substrate protein, thus completing the reaction cycle. Several rounds of ATP-dependent interactions between DnaJ, DnaK and GrpE are required for fully efficient folding. Also involved, together with DnaK and GrpE, in the DNA replication of plasmids through activation of initiation proteins. In Marinobacter nauticus (strain ATCC 700491 / DSM 11845 / VT8) (Marinobacter aquaeolei), this protein is Chaperone protein DnaJ.